A 130-amino-acid chain; its full sequence is Small ribosomal subunit protein bS16 (130 aa).

Positions 80 to 130 (AGHTPKKERANMKKAQPGKKAVERAEEKAAKASAAAEAPAEAPAAEAAAEE) are disordered. A compositionally biased stretch (basic and acidic residues) spans 99-109 (KAVERAEEKAA). A compositionally biased stretch (low complexity) spans 110-130 (KASAAAEAPAEAPAAEAAAEE).

The protein belongs to the bacterial ribosomal protein bS16 family.

The protein is Small ribosomal subunit protein bS16 of Jannaschia sp. (strain CCS1).